The sequence spans 808 residues: Glycerol-3-phosphate acyltransferase (808 aa).

Residues 306–311 (HRSHMD) carry the HXXXXD motif motif.

The protein belongs to the GPAT/DAPAT family.

It localises to the cell inner membrane. The enzyme catalyses sn-glycerol 3-phosphate + an acyl-CoA = a 1-acyl-sn-glycero-3-phosphate + CoA. It functions in the pathway phospholipid metabolism; CDP-diacylglycerol biosynthesis; CDP-diacylglycerol from sn-glycerol 3-phosphate: step 1/3. The sequence is that of Glycerol-3-phosphate acyltransferase from Vibrio parahaemolyticus serotype O3:K6 (strain RIMD 2210633).